Consider the following 583-residue polypeptide: Radixin (583 aa).

The FERM domain occupies 5–295 (INVRVTTMDA…GNHELYMRRR (291 aa)). A 1,2-diacyl-sn-glycero-3-phospho-(1D-myo-inositol) contacts are provided by residues 60-63 (KLNK) and lysine 278. 2 disordered regions span residues 310–336 (REEKHQKQLERAQLENEKKKREIAEKE) and 436–527 (KKKE…VKKQ). Composition is skewed to basic and acidic residues over residues 436 to 447 (KKKEEEASEWQH) and 455 to 464 (DLEKTKEELK). Residues 469 to 480 (APPPPPPPPVIP) are compositionally biased toward pro residues. Composition is skewed to basic and acidic residues over residues 483-492 (ENEHDEHDEN) and 506-525 (MNHRSEEERVTETQKNERVK).

The protein localises to the cell membrane. It is found in the cytoplasm. The protein resides in the cytoskeleton. Probably plays a crucial role in the binding of the barbed end of actin filaments to the plasma membrane. The protein is Radixin (RDX) of Gallus gallus (Chicken).